A 452-amino-acid polypeptide reads, in one-letter code: uncharacterized protein (452 aa).

This is an uncharacterized protein from Chlamydia pneumoniae (Chlamydophila pneumoniae).